Reading from the N-terminus, the 369-residue chain is Tsukushi (369 aa).

Residues 1 to 19 (MQFLAWFNMLLLLPCFSTT) form the signal peptide. The region spanning 20–60 (KTCFPGCHCEVESFGLFDSFSLTKVDCSGIGSHIVPVPIPL) is the LRRNT domain. LRR repeat units follow at residues 61-81 (DTSY…SMLT), 87-108 (TLVS…TFSR), 111-132 (YLES…CFSS), 134-155 (PLGD…VFAS), 161-181 (PLNV…HEKS), 184-205 (NIQN…QGIP), 206-226 (LRYL…DFKG), 229-248 (GLIH…SPYS), 254-276 (ALQV…VIFG), 279-300 (SIQE…VLKY), and 303-323 (SLKS…KEGQ). N76 carries N-linked (GlcNAc...) asparagine glycosylation. The N-linked (GlcNAc...) asparagine glycan is linked to N189. N284 is a glycosylation site (N-linked (GlcNAc...) asparagine).

In terms of assembly, forms a ternary complex with chordin/CHRD and BMP4. As to quaternary structure, interacts with FZD4 (via FZ domain); competes with WNT2B for binding to FZD4, inhibiting Wnt signaling and repressing peripheral eye development. Interacts with BMP4; shows stronger interaction with BMP4 than isoform 2. Interacts with DVR1/VG1; the interaction is inhibited by BMP4. Interacts with BMP7. Interacts with FZD4 (via FZ domain); competes with WNT2B for binding to FZD4, inhibiting Wnt signaling and repressing peripheral eye development. Interacts with BMP4; shows weaker interaction with BMP4 than isoform 1. Interacts with DVR1/VG1; the interaction is inhibited by BMP4. Interacts with BMP7. In terms of processing, N-glycosylated. In terms of tissue distribution, during embryonic development, expressed in the middle primitive streak and Hensen's node. Expressed in the peripheral region of the developing eye. Expressed in the presomitic mesoderm during somitogenesis in a NOTCH-dependent manner.

The protein resides in the secreted. In terms of biological role, contributes to various developmental events through its interactions with multiple signaling pathways. Dorsalizing factor involved in the induction of Hensen's node by inhibiting bone morphogenetic proteins during gastrulation and by enhancing DVR1/VG1 activity. Wnt signaling inhibitor which competes with WNT2B for binding to Wnt receptor FZD4 and represses WNT2B-dependent development of the peripheral eye. Shows strong bone morphogenetic protein antagonistic activity. Its function is as follows. Shows weak bone morphogenetic protein antagonistic activity. This is Tsukushi (TSKU) from Gallus gallus (Chicken).